The primary structure comprises 111 residues: Guanylate cyclase activator 2B (111 aa).

An N-terminal signal peptide occupies residues 1-26 (MGSRTLLGHLSVLAVVLLLLLQGTQS). Residues 27-96 (VDIKYQGYQV…SILQALRTMD (70 aa)) constitute a propeptide that is removed on maturation. 3 disulfides stabilise this stretch: Cys67–Cys80, Cys100–Cys108, and Cys103–Cys111.

The protein belongs to the guanylin family.

The protein resides in the secreted. Functionally, endogenous activator of intestinal guanylate cyclase. It stimulates this enzyme through the same receptor binding region as the heat-stable enterotoxins. May be a potent physiological regulator of intestinal fluid and electrolyte transport. May be an autocrine/paracrine regulator of intestinal salt and water transport. This Cavia porcellus (Guinea pig) protein is Guanylate cyclase activator 2B (GUCA2B).